The sequence spans 118 residues: MARIAGVNIPDNKHTVISLTYIYGVGRTTAQKICAVTGVNPAAKIKDLSDEQIEQLRGEVAKFTTEGDLRREINMKIKRLMDLGCYRGLRHRRGLPVRGQRTKTNARTRKGPRKPIRK.

Residues 93 to 118 (RGLPVRGQRTKTNARTRKGPRKPIRK) are disordered.

The protein belongs to the universal ribosomal protein uS13 family. As to quaternary structure, part of the 30S ribosomal subunit. Forms a loose heterodimer with protein S19. Forms two bridges to the 50S subunit in the 70S ribosome.

Located at the top of the head of the 30S subunit, it contacts several helices of the 16S rRNA. In the 70S ribosome it contacts the 23S rRNA (bridge B1a) and protein L5 of the 50S subunit (bridge B1b), connecting the 2 subunits; these bridges are implicated in subunit movement. Contacts the tRNAs in the A and P-sites. The chain is Small ribosomal subunit protein uS13 from Pseudomonas fluorescens (strain ATCC BAA-477 / NRRL B-23932 / Pf-5).